The sequence spans 91 residues: Potassium channel toxin BuTXK-beta (91 aa).

Residues 1-20 (MQRNLVVLLLLGMVALSSCG) form the signal peptide. A propeptide spanning residues 21–27 (LREKHFQ) is cleaved from the precursor. Residues 54–91 (QFGCPAYQGYCDDHCQDIKKEEGFCHGMKCKCGIPMGF) enclose the BetaSPN-type CS-alpha/beta domain. Intrachain disulfides connect C57-C78, C64-C83, and C68-C85.

The protein belongs to the long chain scorpion toxin family. Class 1 subfamily. Expressed by the venom gland.

The protein localises to the secreted. In terms of biological role, inhibits voltage-gated potassium channel. The polypeptide is Potassium channel toxin BuTXK-beta (Buthus israelis (Israeli scorpion)).